The following is a 214-amino-acid chain: Pyridoxine/pyridoxamine 5'-phosphate oxidase (214 aa).

Substrate-binding positions include 9-12 (RKNY) and lysine 67. FMN contacts are provided by residues 62–67 (RIVLLK), 77–78 (YT), lysine 83, lysine 84, and glutamine 106. Tyrosine 124, arginine 128, and serine 132 together coordinate substrate. Residues 141–142 (QS) and tryptophan 186 contribute to the FMN site. 192-194 (RLH) lines the substrate pocket. Arginine 196 contacts FMN.

It belongs to the pyridoxamine 5'-phosphate oxidase family. In terms of assembly, homodimer. FMN serves as cofactor.

It catalyses the reaction pyridoxamine 5'-phosphate + O2 + H2O = pyridoxal 5'-phosphate + H2O2 + NH4(+). The enzyme catalyses pyridoxine 5'-phosphate + O2 = pyridoxal 5'-phosphate + H2O2. Its pathway is cofactor metabolism; pyridoxal 5'-phosphate salvage; pyridoxal 5'-phosphate from pyridoxamine 5'-phosphate: step 1/1. It participates in cofactor metabolism; pyridoxal 5'-phosphate salvage; pyridoxal 5'-phosphate from pyridoxine 5'-phosphate: step 1/1. Catalyzes the oxidation of either pyridoxine 5'-phosphate (PNP) or pyridoxamine 5'-phosphate (PMP) into pyridoxal 5'-phosphate (PLP). This is Pyridoxine/pyridoxamine 5'-phosphate oxidase from Leptospira borgpetersenii serovar Hardjo-bovis (strain JB197).